The primary structure comprises 545 residues: MAAKEVKFSTDARDRMLKGVNILADAVKVTLGPKGRNVVIEKSFGAPRITKDGVSVAKEIELADKFENMGAQMVKEVASRTNDEAGDGTTTATVLAQAIVREGMKAVAAGMNPMDLKRGIDLATTTVVEAIKAAARPVKDSDEVAQVGTISANGEAQIGRFIADASQKVGNEGVITVEENKGMDTEVEVVEGMQFDRGYLSPYFVTNPDKMIADLEDAYILLHEKKLSSLQPMVPLLEAVIQSTRPLIIVAEDVEGEALATLVVNKLRGGLKIAAVKAPGFGDRRKAMLQDIAILTGGQVISDDLGMKLENVTLDMLGRAKKVTISKENTTIVDGHGDKAEINARVAHIRTQIEETTSDYDREKLQERVAKLAGGVAVIRVGGMTEVEVKERKDRVDDALNATRAAVQEGIIVGGGVALVQAAKKLNDLTGANSDQDAGISIVRRALEAPLRQIAENAGVDGAVVAGKVRESADPAFGFNAQTEEYGDMFGFGVIDPAKVTRTALEDAASIAGLLITTECMIAEKPEPKAAPAGGMGGMGGMDMM.

ATP is bound by residues Thr-30–Pro-33, Lys-51, Asp-87–Thr-91, Gly-415, and Asp-496.

The protein belongs to the chaperonin (HSP60) family. In terms of assembly, forms a cylinder of 14 subunits composed of two heptameric rings stacked back-to-back. Interacts with the co-chaperonin GroES.

It localises to the cytoplasm. The enzyme catalyses ATP + H2O + a folded polypeptide = ADP + phosphate + an unfolded polypeptide.. In terms of biological role, together with its co-chaperonin GroES, plays an essential role in assisting protein folding. The GroEL-GroES system forms a nano-cage that allows encapsulation of the non-native substrate proteins and provides a physical environment optimized to promote and accelerate protein folding. This chain is Chaperonin GroEL, found in Rhodobacter capsulatus (Rhodopseudomonas capsulata).